Consider the following 123-residue polypeptide: UPF0102 protein PputW619_0932 (123 aa).

The protein belongs to the UPF0102 family.

In Pseudomonas putida (strain W619), this protein is UPF0102 protein PputW619_0932.